The following is a 414-amino-acid chain: Lactosylceramide alpha-2,3-sialyltransferase (414 aa).

Residues 1–65 lie on the Cytoplasmic side of the membrane; that stretch reads MHTEAVGGAA…MRRPSLLIKD (65 aa). Residues 66–86 form a helical; Signal-anchor for type II membrane protein membrane-spanning segment; sequence ICKCTLVAFGVWLLYILILNY. Residues 87-414 lie on the Lumenal side of the membrane; sequence TAEECDMKRM…VVEDLSGGIH (328 aa). Residues Cys-194 and Cys-352 are joined by a disulfide bond. N-linked (GlcNAc...) asparagine glycans are attached at residues Asn-235, Asn-279, and Asn-389.

This sequence belongs to the glycosyltransferase 29 family. Mainly expressed in brain, and then testis, heart and liver, almost all tissues showed some levels of the gene expression.

It localises to the golgi apparatus membrane. The enzyme catalyses a beta-D-Gal-(1-&gt;4)-beta-D-Glc-(1&lt;-&gt;1)-Cer(d18:1(4E)) + CMP-N-acetyl-beta-neuraminate = a ganglioside GM3 (d18:1(4E)) + CMP + H(+). The catalysed reaction is ganglioside GA2 (d18:1(4E)/18:0) + CMP-N-acetyl-beta-neuraminate = ganglioside GM2 (d18:1(4E)/18:0) + CMP + H(+). It catalyses the reaction a beta-D-Gal-(1&lt;-&gt;1')-ceramide + CMP-N-acetyl-beta-neuraminate = N-acetyl-alpha-neuraminosyl-(2-&gt;3)-beta-D-galactosyl-(1&lt;-&gt;1')-ceramide + CMP + H(+). It carries out the reaction ganglioside GA1 (d18:1(4E)/18:0) + CMP-N-acetyl-beta-neuraminate = ganglioside GM1 (d18:1(4E)/18:0) + CMP + H(+). (Microbial infection) Gangliosides GD1b and GT1b (derived from GM3) may serve as receptors for some C.botulinum neurotoxins (minimally types BoNT/A, B, C). In terms of biological role, transfers the sialyl group (N-acetyl-alpha-neuraminyl or NeuAc) from CMP-NeuAc to the non-reducing terminal galactose (Gal) of glycosphingolipids forming gangliosides (important molecules involved in the regulation of multiple cellular processes, including cell proliferation and differentiation, apoptosis, embryogenesis, development, and oncogenesis). Mainly involved in the biosynthesis of ganglioside GM3 but can also use different glycolipids as substrate acceptors such as D-galactosylceramide (GalCer), asialo-GM2 (GA2) and asialo-GM1 (GA1), although less preferentially than beta-D-Gal-(1-&gt;4)-beta-D-Glc-(1&lt;-&gt;1)-Cer (LacCer). In Mus musculus (Mouse), this protein is Lactosylceramide alpha-2,3-sialyltransferase (St3gal5).